Reading from the N-terminus, the 1051-residue chain is Probable valine--tRNA ligase, mitochondrial (1051 aa).

The N-terminal 20 residues, 1–20, are a transit peptide targeting the mitochondrion; it reads MNKLLFLSKKSSTSNLYRFY. The 'HIGH' region signature appears at 71–81; it reads PNVTGSLHIGH. The short motif at 606 to 610 is the 'KMSKS' region element; the sequence is KMSKS. Position 609 (Lys-609) interacts with ATP. Positions 972 to 1019 form a coiled coil; sequence KELQISIEFDKEINNQLNQKLINPNQSNDKKILKLENFIKQLQDEIDN.

This sequence belongs to the class-I aminoacyl-tRNA synthetase family.

It is found in the mitochondrion. It catalyses the reaction tRNA(Val) + L-valine + ATP = L-valyl-tRNA(Val) + AMP + diphosphate. The sequence is that of Probable valine--tRNA ligase, mitochondrial (valS2) from Dictyostelium discoideum (Social amoeba).